Reading from the N-terminus, the 806-residue chain is MWFFARDPVRDFPFELSPEPPEGGPPGPWILHRGRKKATGSAVSIFVYDVKPGAEEQTQVAKAAFKRLKTLRHPNILAYIDGLETEKCLHIVTEAVTPLGTYLKARAEAGGLKEQELSWGLHQIVKALSFLVNDCNLIHNNVCMAAVFVDRAGEWKLGGLDYMYSAQGNGGGPPSKGIPELEQYDPPELADSSSRAVREKWSADMWRLGCLIWEVFNGSLPRAAALRNPGKIPKSLVTHYCELVGANPKVRPNPARFLQNCRAPGGFMSNRFVETNLFLEEIQIKEPAEKQKFFQELSKSLDSFPEDFCRHKVLPQLLTAFEFGNAGAVVLTPLFKVGKSLRAEEYQEKIIPVVVKMFSSTDRAMRIRLLQQMEQFIQYLDEPTVNTQIFPHVTHGFLDTNPAIREQTVKSMLLLAPKLNEANLNVELMKHFARLQAKDDQGPIRCNTTVCLGKIGSYLSASTRHRVLTSAFSRATKDPFAPSRVAGVLGFAATHNLYSMDDCAHKILPVLCGLTVDPEKSVRDQAFKTIRSFLSKLESVSEDPTQLAEVEKDVHAASSPGTGGAAASWAGWAVTGVSSLTSKLIRAHPTPVPSDTTVPQRPVPEGNPAPAPALAQAIPATSGHWETQEDKDTAEDSATADRWDDEDWGSLEQEAESVLAQQDDWSAKGQGSRAGQINHPDHKSLESHWSSWEVEGSWDQGWQEPSSVEPPPEGTRLASEYNWGGAEPSDKGDPFAALSVRPSAQPRPDPDSWGEDNWEGLEAESRQVKAELARKKREERRREMEAKRAEKKTTKGPMKLGARKLD.

In terms of domain architecture, Protein kinase spans 14–314; sequence FELSPEPPEG…PEDFCRHKVL (301 aa). HEAT repeat units lie at residues 350-388, 389-427, and 507-545; these read IIPV…VNTQ, IFPH…LNVE, and ILPV…EDPT. Disordered regions lie at residues 586 to 642 and 663 to 806; these read RAHP…TADR and DDWS…RKLD. Over residues 601-611 the composition is skewed to pro residues; it reads RPVPEGNPAPA. Residue Ser-752 is modified to Phosphoserine. Positions 752-762 are enriched in acidic residues; sequence SWGEDNWEGLE. A coiled-coil region spans residues 755–795; that stretch reads EDNWEGLEAESRQVKAELARKKREERRREMEAKRAEKKTTK. Basic and acidic residues-rich tracts occupy residues 763 to 773 and 780 to 793; these read AESRQVKAELA and RRRE…EKKT. Residues 791 to 806 are interaction with COPB1; sequence KKTTKGPMKLGARKLD.

It belongs to the protein kinase superfamily. Homooligomer. Interacts with GORAB. Interacts with COPA, COPB1 and COPB2. Interacts with AP2B1. As to expression, expressed in diaphragm, quadriceps, thymus, liver, lung, spleen, kidney, heart and brain. Prominently expressed in neurons, and enriched at central nervous system synapses and neuromuscular junctions.

It localises to the cytoplasm. The protein resides in the cytoskeleton. It is found in the microtubule organizing center. The protein localises to the centrosome. Its subcellular location is the endoplasmic reticulum-Golgi intermediate compartment. It localises to the golgi apparatus. The protein resides in the cis-Golgi network. Regulates COPI-mediated retrograde protein traffic at the interface between the Golgi apparatus and the endoplasmic reticulum. Involved in the maintenance of the Golgi apparatus morphology. In Mus musculus (Mouse), this protein is N-terminal kinase-like protein (Scyl1).